A 338-amino-acid polypeptide reads, in one-letter code: Probable G-protein coupled receptor 160 (338 aa).

The Extracellular portion of the chain corresponds to 1 to 23 (MTALSSENCSFQYQLRQTNQPLD). A glycan (N-linked (GlcNAc...) asparagine) is linked at Asn8. Residues 24 to 44 (VNYLLFLIILGKILLNILTLG) traverse the membrane as a helical segment. Over 45 to 58 (MRRKNTCQNFMEYF) the chain is Cytoplasmic. The chain crosses the membrane as a helical span at residues 59-79 (CISLAFVDLLLLVNISIILYF). Residues 80 to 93 (RDFVLLSIRFTKYH) lie on the Extracellular side of the membrane. The helical transmembrane segment at 94 to 114 (ICLFTQIISFTYGFLHYPVFL) threads the bilayer. Residues 115-136 (TACIDYCLNFSKTTKLSFKCQK) are Cytoplasmic-facing. Residues 137 to 157 (LFYFFTVILIWISVLAYVLGD) form a helical membrane-spanning segment. Residues 158–177 (PAIYQSLKAQNAYSRHCPFY) lie on the Extracellular side of the membrane. The chain crosses the membrane as a helical span at residues 178–198 (VSIQSYWLSFFMVMILFVAFI). Over 199–244 (TCWEEVTTLVQAIRITSYMNETILYFPFSSHSSYTVRSKKIFLSKL) the chain is Cytoplasmic. A helical membrane pass occupies residues 245 to 265 (IVCFLSTWLPFVLLQVIIVLL). Residues 266 to 268 (KVQ) are Extracellular-facing. A helical membrane pass occupies residues 269–289 (IPAYIEMNIPWLYFVNSFLIA). Topologically, residues 290–338 (TVYWFNCHKLNLKDIGLPLDPFVNWKCCFIPLTIPNLEQIEKPISIMIC) are cytoplasmic.

It belongs to the G-protein coupled receptor 1 family.

It localises to the cell membrane. Its function is as follows. Orphan receptor. In Homo sapiens (Human), this protein is Probable G-protein coupled receptor 160 (GPR160).